The following is a 194-amino-acid chain: Imidazoleglycerol-phosphate dehydratase (194 aa).

It belongs to the imidazoleglycerol-phosphate dehydratase family.

Its subcellular location is the cytoplasm. It carries out the reaction D-erythro-1-(imidazol-4-yl)glycerol 3-phosphate = 3-(imidazol-4-yl)-2-oxopropyl phosphate + H2O. Its pathway is amino-acid biosynthesis; L-histidine biosynthesis; L-histidine from 5-phospho-alpha-D-ribose 1-diphosphate: step 6/9. In Streptococcus mutans serotype c (strain ATCC 700610 / UA159), this protein is Imidazoleglycerol-phosphate dehydratase.